The primary structure comprises 319 residues: Ornithine carbamoyltransferase (319 aa).

Carbamoyl phosphate-binding positions include 55–58 (STRT), Gln-82, Arg-106, and 133–136 (HPCQ). Residues Asn-171, Asp-234, and 238–239 (SM) each bind L-ornithine. Residues 274-275 (CL) and Arg-302 each bind carbamoyl phosphate.

Belongs to the aspartate/ornithine carbamoyltransferase superfamily. OTCase family.

The protein localises to the cytoplasm. It catalyses the reaction carbamoyl phosphate + L-ornithine = L-citrulline + phosphate + H(+). Its pathway is amino-acid biosynthesis; L-arginine biosynthesis; L-arginine from L-ornithine and carbamoyl phosphate: step 1/3. Its function is as follows. Reversibly catalyzes the transfer of the carbamoyl group from carbamoyl phosphate (CP) to the N(epsilon) atom of ornithine (ORN) to produce L-citrulline. This is Ornithine carbamoyltransferase from Corynebacterium diphtheriae (strain ATCC 700971 / NCTC 13129 / Biotype gravis).